A 198-amino-acid chain; its full sequence is Protein GrpE (198 aa).

It belongs to the GrpE family. In terms of assembly, homodimer.

It is found in the cytoplasm. In terms of biological role, participates actively in the response to hyperosmotic and heat shock by preventing the aggregation of stress-denatured proteins, in association with DnaK and GrpE. It is the nucleotide exchange factor for DnaK and may function as a thermosensor. Unfolded proteins bind initially to DnaJ; upon interaction with the DnaJ-bound protein, DnaK hydrolyzes its bound ATP, resulting in the formation of a stable complex. GrpE releases ADP from DnaK; ATP binding to DnaK triggers the release of the substrate protein, thus completing the reaction cycle. Several rounds of ATP-dependent interactions between DnaJ, DnaK and GrpE are required for fully efficient folding. This Lysinibacillus sphaericus (Bacillus sphaericus) protein is Protein GrpE.